A 291-amino-acid chain; its full sequence is Ribonuclease Z (291 aa).

7 residues coordinate Zn(2+): H61, H63, D65, H66, H133, D201, and H257. The Proton acceptor role is filled by D65.

Belongs to the RNase Z family. Homodimer. Zn(2+) is required as a cofactor.

It carries out the reaction Endonucleolytic cleavage of RNA, removing extra 3' nucleotides from tRNA precursor, generating 3' termini of tRNAs. A 3'-hydroxy group is left at the tRNA terminus and a 5'-phosphoryl group is left at the trailer molecule.. In terms of biological role, zinc phosphodiesterase, which displays some tRNA 3'-processing endonuclease activity. Probably involved in tRNA maturation, by removing a 3'-trailer from precursor tRNA. The chain is Ribonuclease Z from Saccharolobus islandicus (strain Y.N.15.51 / Yellowstone #2) (Sulfolobus islandicus).